A 449-amino-acid chain; its full sequence is Probable aminotransferase TAT1 (449 aa).

Polar residues predominate over residues 1 to 12 (MNHNSNLVLPSH). Residues 1–20 (MNHNSNLVLPSHQTETQTQD) form a disordered region.

It belongs to the class-I pyridoxal-phosphate-dependent aminotransferase family. It depends on pyridoxal 5'-phosphate as a cofactor.

This Arabidopsis thaliana (Mouse-ear cress) protein is Probable aminotransferase TAT1.